A 329-amino-acid polypeptide reads, in one-letter code: Putative glucose-6-phosphate 1-epimerase (329 aa).

Residues 1–13 show a composition bias toward low complexity; that stretch reads MAAPAPAGAAASP. Positions 1–20 are disordered; sequence MAAPAPAGAAASPSPKPQLP. Positions 82, 100, and 105 each coordinate substrate. His-183 is an active-site residue. Residue Asp-228 coordinates substrate. Glu-287 is a catalytic residue.

It belongs to the glucose-6-phosphate 1-epimerase family.

It catalyses the reaction alpha-D-glucose 6-phosphate = beta-D-glucose 6-phosphate. The protein is Putative glucose-6-phosphate 1-epimerase of Cenchrus ciliaris (Buffelgrass).